A 337-amino-acid chain; its full sequence is Glucose transporter 2C (337 aa).

Positions 1-22 are disordered; it reads MTERRDNVSHAPDAIEGPNDGA. Over 1–43 the chain is Cytoplasmic; that stretch reads MTERRDNVSHAPDAIEGPNDGAHAEDTSPGFFSLENLGVAQVQ. The chain crosses the membrane as a helical span at residues 44-64; sequence VVGGTLNGFSIGFVAVYILLY. Residues 65–119 lie on the Extracellular side of the membrane; it reads EVATNCSLFKTTEACKAVGSYGCEWKDTEVCSWKKECDSDSDGVNPCESLIGYSS. The N-linked (GlcNAc...) asparagine glycan is linked to Asn69. Residues 120-140 form a helical membrane-spanning segment; the sequence is LYSGIFASAMIVGSMVGSIIA. Residues 141–152 lie on the Cytoplasmic side of the membrane; the sequence is GKCITMFGLKKS. The helical transmembrane segment at 153-173 threads the bilayer; it reads FIIVGVMSVVASALNHISVAT. Residues 174 to 175 are Extracellular-facing; that stretch reads NE. Residues 176–196 form a helical membrane-spanning segment; it reads FWVLCAGRVLMGIGLGVVCVI. The Cytoplasmic segment spans residues 197-214; it reads CPMYVNENAHPKLSKVDG. The helical transmembrane segment at 215–235 threads the bilayer; it reads VLFQVFITFGIMLAAMLGLIL. At 236–250 the chain is on the extracellular side; that stretch reads DKTVNYDNDPDMAGR. The helical transmembrane segment at 251–271 threads the bilayer; sequence FHGFCAVSSVLSVAMFLVGMF. The Cytoplasmic segment spans residues 272–300; the sequence is LRESTATFSQDDDGKADGGMDPNEYGWGQ. Residues 301–321 form a helical membrane-spanning segment; that stretch reads MLWPLFMGAVTAGTLQLTGIN. At 322 to 337 the chain is on the extracellular side; it reads AVMNYAPKITENLGMD.

The protein belongs to the major facilitator superfamily. Sugar transporter (TC 2.A.1.1) family.

Its subcellular location is the membrane. Functionally, facilitative glucose transporter. The protein is Glucose transporter 2C (THT2C) of Trypanosoma brucei brucei.